The primary structure comprises 125 residues: Large ribosomal subunit protein bL12 (125 aa).

This sequence belongs to the bacterial ribosomal protein bL12 family. Homodimer. Part of the ribosomal stalk of the 50S ribosomal subunit. Forms a multimeric L10(L12)X complex, where L10 forms an elongated spine to which 2 to 4 L12 dimers bind in a sequential fashion. Binds GTP-bound translation factors.

Its function is as follows. Forms part of the ribosomal stalk which helps the ribosome interact with GTP-bound translation factors. Is thus essential for accurate translation. This chain is Large ribosomal subunit protein bL12, found in Porphyromonas gingivalis (strain ATCC 33277 / DSM 20709 / CIP 103683 / JCM 12257 / NCTC 11834 / 2561).